The following is a 368-amino-acid chain: Agmatine deiminase (368 aa).

Residue Cys-357 is the Amidino-cysteine intermediate of the active site.

Belongs to the agmatine deiminase family. In terms of assembly, homodimer.

The catalysed reaction is agmatine + H2O = N-carbamoylputrescine + NH4(+). It participates in amine and polyamine biosynthesis; putrescine biosynthesis via agmatine pathway; N-carbamoylputrescine from agmatine: step 1/1. Mediates the hydrolysis of agmatine into N-carbamoylputrescine in the arginine decarboxylase (ADC) pathway of putrescine biosynthesis, a basic polyamine. This chain is Agmatine deiminase, found in Pseudomonas aeruginosa (strain UCBPP-PA14).